A 216-amino-acid polypeptide reads, in one-letter code: Inner membrane assembly complex subunit 22 (216 aa).

Residues 1–26 (MFMARQVLRNGLFLRSLAPIKITART) constitute a mitochondrion transit peptide. The Mitochondrial matrix segment spans residues 27-43 (VASANAGIKRKSRFDKT). The chain crosses the membrane as a helical span at residues 44 to 63 (MIKPLLLVMIFGSILNAVIA). Residues 64–93 (EKRNIIDMERKYKLKLDKLKELIRRVHDNN) are a coiled coil. The Mitochondrial intermembrane portion of the chain corresponds to 64–216 (EKRNIIDMER…KEHDKIPKFL (153 aa)).

As to quaternary structure, component of the inner membrane assembly (INA) complex, composed of INA17 and INA22. Interacts with a subset of F(1)F(0)-ATP synthase subunits of the F(1)-domain and the peripheral stalk.

It localises to the mitochondrion inner membrane. Component of the INA complex (INAC) that promotes the biogenesis of mitochondrial F(1)F(0)-ATP synthase. INAC facilitates the assembly of the peripheral stalk and promotes the assembly of the catalytic F(1)-domain with the membrane-embedded F(0)-domain. In Saccharomyces cerevisiae (strain ATCC 204508 / S288c) (Baker's yeast), this protein is Inner membrane assembly complex subunit 22.